A 322-amino-acid chain; its full sequence is Major serine/threonine-protein phosphatase PP2A-2 catalytic subunit (322 aa).

Mn(2+) contacts are provided by D70, H72, D98, and N130. The active-site Proton donor is H131. Mn(2+)-binding residues include H180 and H254. L322 is subject to Leucine methyl ester.

The protein belongs to the PPP phosphatase family. PP-2A subfamily. Requires Mn(2+) as cofactor.

It carries out the reaction O-phospho-L-seryl-[protein] + H2O = L-seryl-[protein] + phosphate. The catalysed reaction is O-phospho-L-threonyl-[protein] + H2O = L-threonyl-[protein] + phosphate. Functionally, essential role in cell cycle control. PP2A may be involved in controlling the entry into mitosis, possibly acting as an inhibitor. The protein is Major serine/threonine-protein phosphatase PP2A-2 catalytic subunit (ppa2) of Schizosaccharomyces pombe (strain 972 / ATCC 24843) (Fission yeast).